Consider the following 206-residue polypeptide: 3-isopropylmalate dehydratase small subunit (206 aa).

The protein belongs to the LeuD family. LeuD type 1 subfamily. Heterodimer of LeuC and LeuD.

It catalyses the reaction (2R,3S)-3-isopropylmalate = (2S)-2-isopropylmalate. It participates in amino-acid biosynthesis; L-leucine biosynthesis; L-leucine from 3-methyl-2-oxobutanoate: step 2/4. Its function is as follows. Catalyzes the isomerization between 2-isopropylmalate and 3-isopropylmalate, via the formation of 2-isopropylmaleate. The chain is 3-isopropylmalate dehydratase small subunit from Acidobacterium capsulatum (strain ATCC 51196 / DSM 11244 / BCRC 80197 / JCM 7670 / NBRC 15755 / NCIMB 13165 / 161).